Here is a 457-residue protein sequence, read N- to C-terminus: Transmembrane protein 143 (457 aa).

2 consecutive transmembrane segments (helical) span residues 264 to 284 and 285 to 305; these read ILNVTLIVSGVVFFVNVGMVV and LSDLKMATSLLLLLFAAFMGL. Position 316 is a phosphoserine (S316). The span at 429-439 shows a compositional bias: polar residues; that stretch reads LSSPKSAPSDD. Residues 429 to 457 are disordered; sequence LSSPKSAPSDDNSLEKPLGPAQPSHLVGN.

It is found in the membrane. The sequence is that of Transmembrane protein 143 (TMEM143) from Bos taurus (Bovine).